Here is a 346-residue protein sequence, read N- to C-terminus: F(420)H(2) dehydrogenase subunit H (346 aa).

The next 8 membrane-spanning stretches (helical) occupy residues 18–38, 91–111, 125–145, 170–190, 196–216, 257–277, 284–304, and 326–346; these read GIVG…AVWL, IFML…AVFI, ISVL…FMVA, PLGI…IVDI, LHWN…SLMA, ILGS…PGFI, GIIV…MVII, and LLPL…YLGA.

This sequence belongs to the complex I subunit 1 family. The FPO complex is composed of at least 13 different subunits. FpoA, FpoH, FpoJ, FpoK, FpoL, FpoM and FpoN proteins constitute the membrane sector of the complex.

The protein localises to the cell membrane. It carries out the reaction methanophenazine + reduced coenzyme F420-(gamma-L-Glu)(n) = dihydromethanophenazine + oxidized coenzyme F420-(gamma-L-Glu)(n) + H(+). Its function is as follows. Component of the F(420)H(2) dehydrogenase (FPO complex) which is part of the energy-conserving F(420)H(2):heterodisulfide oxidoreductase system. The membrane-bound electron transfer system of the complex plays an important role in the metabolism of methylotrophic methanogens when the organisms grow on methanol or methylamines. Catalyzes the oxidation of methanophenazine to dihydromethanophenazine. It shuttles electrons from F(420)H(2), via FAD and iron-sulfur (Fe-S) centers, to methanophenazine (an electron carrier in the membrane). It couples the redox reaction to proton translocation (for every two electrons transferred, two hydrogen ions are translocated across the cytoplasmic membrane), and thus conserves the redox energy in a proton gradient. In Methanosarcina barkeri (strain Fusaro / DSM 804), this protein is F(420)H(2) dehydrogenase subunit H.